The chain runs to 491 residues: Monothiol glutaredoxin-S11 (491 aa).

Glutaredoxin domains are found at residues 151 to 253, 287 to 389, and 394 to 491; these read NKRL…NIPL, KERL…GIVA, and EDRL…TLSE. Residue K411 coordinates glutathione. C419 provides a ligand contact to [2Fe-2S] cluster. Residues R448, F460, and 473-474 each bind glutathione; that span reads CD.

It belongs to the glutaredoxin family. CGFS subfamily.

Its subcellular location is the cytoplasm. Functionally, may only reduce GSH-thiol disulfides, but not protein disulfides. This is Monothiol glutaredoxin-S11 (GRXS11) from Oryza sativa subsp. japonica (Rice).